Here is a 650-residue protein sequence, read N- to C-terminus: Rab proteins geranylgeranyltransferase component A 1 (650 aa).

Disordered stretches follow at residues 156 to 208 (IPAE…ETPK) and 603 to 650 (PAPP…EPSE). Residues 177–190 (ATGKKENSDAKSST) show a composition bias toward basic and acidic residues. Polar residues predominate over residues 616 to 634 (DSSQQEVPESSVTPETNSE).

The protein belongs to the Rab GDI family. As to quaternary structure, monomer. Heterotrimer composed of RABGGTA, RABGGTB and CHM; within this trimer, RABGGTA and RABGGTB form the catalytic component B, while CHM (component A) mediates Rab protein binding. Can associate with the Rab GGTase dimer (RGGT or component B) prior to Rab protein binding; the association is stabilized by geranylgeranyl pyrophosphate (GGpp). The CHM:RGGT:Rab complex is destabilized by GGpp. Interacts with RAB1A, RAB1B, RAB7A and RAB27A and mediates their prenylation. Interacts with RAB5A. Interacts with the non-phosphorylated forms of RAB3A, RAB3B, RAB3C, RAB3D, RAB5B, RAB5C RAB8A, RAB8B, RAB10, RAB12, RAB35, and RAB43. Most abundant in the heart, brain, and spleen. Lower levels seen in the lung, liver, muscle and kidney. Extremely low levels seen in the testis.

The protein localises to the cytoplasm. It localises to the cytosol. Its function is as follows. Substrate-binding subunit of the Rab geranylgeranyltransferase (GGTase) complex. Binds unprenylated Rab proteins and presents the substrate peptide to the catalytic component B composed of RABGGTA and RABGGTB, and remains bound to it after the geranylgeranyl transfer reaction. The component A is thought to be regenerated by transferring its prenylated Rab back to the donor membrane. Besides, a pre-formed complex consisting of CHM and the Rab GGTase dimer (RGGT or component B) can bind to and prenylate Rab proteins; this alternative pathway is proposed to be the predominant pathway for Rab protein geranylgeranylation. This Rattus norvegicus (Rat) protein is Rab proteins geranylgeranyltransferase component A 1 (Chm).